Reading from the N-terminus, the 522-residue chain is 4-chlorobenzoate--CoA ligase (522 aa).

Residues 161–169 (TSGTTGLPK), 300–305 (DIYGTT), and asparagine 410 each bind ATP.

It belongs to the ATP-dependent AMP-binding enzyme family. As to quaternary structure, homodimer. It depends on Mg(2+) as a cofactor.

It catalyses the reaction 4-chlorobenzoate + ATP + CoA = 4-chlorobenzoyl-CoA + AMP + diphosphate. It functions in the pathway xenobiotic degradation; 4-chlorobenzoate degradation; 4-hydroxybenzoate from 4-chlorobenzoate: step 2/3. Catalyzes the formation of chlorobenzoyl-CoA via a 2 step reaction. First 4-chlorobenzoate is adenylated by ATP, followed by acyl transfer from the 4-chlorobenzoyl-AMP intermediate to CoA. Benzoate, 4-bromobenzoate, 4-iodobenzoate and 4-fluorobenzoate also act as substrates. Inactive towards 4-nitrobenzoate. In Arthrobacter sp, this protein is 4-chlorobenzoate--CoA ligase.